The chain runs to 316 residues: Aspartate carbamoyltransferase catalytic subunit (316 aa).

The carbamoyl phosphate site is built by Arg-58 and Thr-59. An L-aspartate-binding site is contributed by Lys-86. Residues Arg-108, His-136, and Gln-139 each coordinate carbamoyl phosphate. The L-aspartate site is built by Arg-169 and Arg-223. The carbamoyl phosphate site is built by Gly-264 and Pro-265.

It belongs to the aspartate/ornithine carbamoyltransferase superfamily. ATCase family. Heterododecamer (2C3:3R2) of six catalytic PyrB chains organized as two trimers (C3), and six regulatory PyrI chains organized as three dimers (R2).

The catalysed reaction is carbamoyl phosphate + L-aspartate = N-carbamoyl-L-aspartate + phosphate + H(+). It participates in pyrimidine metabolism; UMP biosynthesis via de novo pathway; (S)-dihydroorotate from bicarbonate: step 2/3. In terms of biological role, catalyzes the condensation of carbamoyl phosphate and aspartate to form carbamoyl aspartate and inorganic phosphate, the committed step in the de novo pyrimidine nucleotide biosynthesis pathway. The sequence is that of Aspartate carbamoyltransferase catalytic subunit from Dinoroseobacter shibae (strain DSM 16493 / NCIMB 14021 / DFL 12).